The following is a 111-amino-acid chain: Iron-sulfur cluster assembly protein CyaY (111 aa).

Belongs to the frataxin family.

Involved in iron-sulfur (Fe-S) cluster assembly. May act as a regulator of Fe-S biogenesis. The sequence is that of Iron-sulfur cluster assembly protein CyaY from Cupriavidus taiwanensis (strain DSM 17343 / BCRC 17206 / CCUG 44338 / CIP 107171 / LMG 19424 / R1) (Ralstonia taiwanensis (strain LMG 19424)).